The primary structure comprises 497 residues: Cobyric acid synthase (497 aa).

One can recognise a GATase cobBQ-type domain in the interval 257–431 (WLRVAAVRLP…WHGLLDNDDF (175 aa)). Cys-338 serves as the catalytic Nucleophile. The active site involves His-423.

It belongs to the CobB/CobQ family. CobQ subfamily.

The protein operates within cofactor biosynthesis; adenosylcobalamin biosynthesis. In terms of biological role, catalyzes amidations at positions B, D, E, and G on adenosylcobyrinic A,C-diamide. NH(2) groups are provided by glutamine, and one molecule of ATP is hydrogenolyzed for each amidation. The chain is Cobyric acid synthase from Mycolicibacterium paratuberculosis (strain ATCC BAA-968 / K-10) (Mycobacterium paratuberculosis).